We begin with the raw amino-acid sequence, 317 residues long: Acetyl-coenzyme A carboxylase carboxyl transferase subunit alpha (317 aa).

Residues 40 to 293 enclose the CoA carboxyltransferase C-terminal domain; the sequence is LEGRVRDAMV…EAVIGDALKE (254 aa).

The protein belongs to the AccA family. Acetyl-CoA carboxylase is a heterohexamer composed of biotin carboxyl carrier protein (AccB), biotin carboxylase (AccC) and two subunits each of ACCase subunit alpha (AccA) and ACCase subunit beta (AccD).

It is found in the cytoplasm. The catalysed reaction is N(6)-carboxybiotinyl-L-lysyl-[protein] + acetyl-CoA = N(6)-biotinyl-L-lysyl-[protein] + malonyl-CoA. It participates in lipid metabolism; malonyl-CoA biosynthesis; malonyl-CoA from acetyl-CoA: step 1/1. Its function is as follows. Component of the acetyl coenzyme A carboxylase (ACC) complex. First, biotin carboxylase catalyzes the carboxylation of biotin on its carrier protein (BCCP) and then the CO(2) group is transferred by the carboxyltransferase to acetyl-CoA to form malonyl-CoA. The protein is Acetyl-coenzyme A carboxylase carboxyl transferase subunit alpha of Sinorhizobium medicae (strain WSM419) (Ensifer medicae).